Consider the following 116-residue polypeptide: Protein Rev (116 aa).

Phosphoserine; by host CK2 is present on Ser-8. The segment at 18-26 is homomultimerization; the sequence is LIKSLYQSN. 2 disordered regions span residues 20–46 and 84–116; these read KSLY…RRWR and DSSE…GAKE. The Nuclear localization signal and RNA-binding (RRE) motif lies at 34-50; it reads TRQARRNRRRRWRERQR. Residues 36 to 46 show a composition bias toward basic residues; it reads QARRNRRRRWR. Residues 73-84 carry the Nuclear export signal and binding to XPO1 motif; sequence LQLPPLERLTLD. Over residues 88–98 the composition is skewed to polar residues; the sequence is DCGTSGTQGVG. 2 positions are modified to phosphoserine; by host: Ser-92 and Ser-99.

Belongs to the HIV-1 REV protein family. In terms of assembly, homomultimer; when bound to the RRE. Multimeric assembly is essential for activity and may involve XPO1. Binds to human KPNB1, XPO1, TNPO1, RANBP5 and IPO7. Interacts with the viral Integrase. Interacts with human KHDRBS1. Interacts with human NAP1; this interaction decreases Rev multimerization and stimulates its activity. Interacts with human DEAD-box helicases DDX3 and DDX24; these interactions may serve for viral RNA export to the cytoplasm and packaging, respectively. Interacts with human PSIP1; this interaction may inhibit HIV-1 DNA integration by promoting dissociation of the Integrase-LEDGF/p75 complex. Asymmetrically arginine dimethylated at one site by host PRMT6. Methylation impairs the RNA-binding activity and export of viral RNA from the nucleus to the cytoplasm. Post-translationally, phosphorylated by protein kinase CK2. Presence of, and maybe binding to the N-terminus of the regulatory beta subunit of CK2 is necessary for CK2-mediated Rev's phosphorylation.

Its subcellular location is the host nucleus. It localises to the host nucleolus. The protein resides in the host cytoplasm. In terms of biological role, escorts unspliced or incompletely spliced viral pre-mRNAs (late transcripts) out of the nucleus of infected cells. These pre-mRNAs carry a recognition sequence called Rev responsive element (RRE) located in the env gene, that is not present in fully spliced viral mRNAs (early transcripts). This function is essential since most viral proteins are translated from unspliced or partially spliced pre-mRNAs which cannot exit the nucleus by the pathway used by fully processed cellular mRNAs. Rev itself is translated from a fully spliced mRNA that readily exits the nucleus. Rev's nuclear localization signal (NLS) binds directly to KPNB1/Importin beta-1 without previous binding to KPNA1/Importin alpha-1. KPNB1 binds to the GDP bound form of RAN (Ran-GDP) and targets Rev to the nucleus. In the nucleus, the conversion from Ran-GDP to Ran-GTP dissociates Rev from KPNB1 and allows Rev's binding to the RRE in viral pre-mRNAs. Rev multimerization on the RRE via cooperative assembly exposes its nuclear export signal (NES) to the surface. Rev can then form a complex with XPO1/CRM1 and Ran-GTP, leading to nuclear export of the complex. Conversion from Ran-GTP to Ran-GDP mediates dissociation of the Rev/RRE/XPO1/RAN complex, so that Rev can return to the nucleus for a subsequent round of export. Beside KPNB1, also seems to interact with TNPO1/Transportin-1, RANBP5/IPO5 and IPO7/RANBP7 for nuclear import. The nucleoporin-like HRB/RIP is an essential cofactor that probably indirectly interacts with Rev to release HIV RNAs from the perinuclear region to the cytoplasm. The sequence is that of Protein Rev from Human immunodeficiency virus type 1 group M subtype B (isolate RF/HAT3) (HIV-1).